Consider the following 246-residue polypeptide: 3'(2'),5'-bisphosphate nucleotidase CysQ (246 aa).

Residues Glu64, Asp83, Leu85, Asp86, and Asp205 each contribute to the Mg(2+) site. Glu64 provides a ligand contact to substrate. Substrate-binding positions include 85–88 (LDGT) and Asp205.

It belongs to the inositol monophosphatase superfamily. CysQ family. Requires Mg(2+) as cofactor.

Its subcellular location is the cell inner membrane. It catalyses the reaction adenosine 3',5'-bisphosphate + H2O = AMP + phosphate. Converts adenosine-3',5'-bisphosphate (PAP) to AMP. The protein is 3'(2'),5'-bisphosphate nucleotidase CysQ of Escherichia coli O157:H7.